Here is a 708-residue protein sequence, read N- to C-terminus: G-box-binding factor (708 aa).

Disordered stretches follow at residues 1–29 (MLSTHHHQGNSSSSSSSSSPSQTIGGSDL) and 123–339 (QQAQ…QTIP). Low complexity-rich tracts occupy residues 11 to 21 (SSSSSSSSSPS), 123 to 219 (QQAQ…QHHQ), and 227 to 316 (SQPQ…SPST). Over residues 324–333 (ETSNSEKKDS) the composition is skewed to basic and acidic residues. 2 repeat units span residues 339–368 (PKCTRCNEAASWKHDKRRWWCKECKKAFTP) and 481–510 (PPCPLCRGISSWKHDKKRYFCKECKKPFTP). The disordered stretch occupies residues 511–604 (VGAGLSPSSS…PTYSPNPSLP (94 aa)). Residues 516-590 (SPSSSPSSPK…SSISQSPLQL (75 aa)) show a composition bias toward low complexity. Polar residues predominate over residues 591–600 (NYQTPTYSPN).

The protein localises to the nucleus. In terms of biological role, cAMP-responsive transcriptional activator regulating late gene expression. Essential component of the developmental switch between early and late development. Binds to a number of CA/GT-rich gene regulatory elements. In Dictyostelium discoideum (Social amoeba), this protein is G-box-binding factor (gbfA).